A 299-amino-acid polypeptide reads, in one-letter code: Circadian clock oscillator protein KaiA (299 aa).

The segment at 1–135 (MQSPLSLCLF…LHLGPICTLP (135 aa)) is psR domain, binds oxidized quinones. The KaiA N-terminal domain occupies 1-169 (MQSPLSLCLF…RLADKLKERL (169 aa)). Residues 170–178 (GYLGVYYKR) form a flexible linker region. The KaiA C-terminal domain maps to 179–287 (KPSHFYRNFS…GEMYRRSIPR (109 aa)).

The protein belongs to the KaiA family. As to quaternary structure, homodimer. The KaiABC1 complex composition changes during the circadian cycle to control KaiC1 phosphorylation. Complexes KaiC1(6), KaiA(2-4):KaiC1(6), KaiB(6):KaiC1(6) and KaiC1(6):KaiB(6):KaiA(12) are among the most important forms, many form cooperatively. KaiA and CikA bind to the same region of the KaiB(fs) form and therefore compete. Interacts with KaiC1 but not KaiC2 or KaiC3. Interacts with itself, not seen to interact with other Kai proteins.

Key component of the KaiABC oscillator complex, which constitutes the main circadian regulator in cyanobacteria. Complex composition changes during the circadian cycle to control KaiC phosphorylation. KaiA stimulates KaiC autophosphorylation, while KaiB sequesters KaiA, leading to KaiC autodephosphorylation. KaiA binding to the KaiC CII domain during the subjective day yields KaiA(2-4):KaiC(6) complexes which stimulate KaiC autophosphorylation. Phospho-Ser-431 KaiC accumulation triggers binding of KaiB during the subjective night to form the KaiB(6):KaiC(6) complex, leading to changes in the output regulators CikA and SasA. KaiB(6):KaiC(6) formation exposes a site for KaiA binding on KaiB that sequesters KaiA from KaiC's CII domain, making the KaiC(6):KaiB(6):KaiA(12) complex resulting in KaiC autodephosphorylation. Complete dephosphorylation of KaiC leads to dissociation of KaiA(2):KaiB(1), completing 1 cycle of the Kai oscillator. Functionally, component of the oscillator and circadian clock in this organism, enhances fitness in a rhythmic environment. Stimulates KaiC1 to autophosphorylate, has no effect on the kinase activity of KaiC2 or KaiC3. In terms of biological role, binds oxidized quinones via the N-terminal PsR domain, allowing it to sense redox changes and possibly mediate clock input. The sequence is that of Circadian clock oscillator protein KaiA from Synechocystis sp. (strain ATCC 27184 / PCC 6803 / Kazusa).